The chain runs to 1171 residues: Protein diaphanous homolog 3 (1171 aa).

Positions 1–15 (MERHRARALGRDSKS) are enriched in basic and acidic residues. A disordered region spans residues 1-40 (MERHRARALGRDSKSSRRKGLQSAPPAGPYEPGEKRPKLH). The short motif at 16–39 (SRRKGLQSAPPAGPYEPGEKRPKL) is the Nuclear localization signal element. Position 47 is a phosphothreonine (Thr47). Residue Ser56 is modified to Phosphoserine. The interval 60-95 (PGSKKERPPLPHLKTVSGISDSSSLSSETMENNPKA) is disordered. Residues 76–86 (SGISDSSSLSS) show a composition bias toward low complexity. Residues 93–455 (PKALPESEVL…QIVLHRDGTD (363 aa)) enclose the GBD/FH3 domain. Residue Ser154 is modified to Phosphoserine. Coiled-coil stretches lie at residues 373–403 (EHKEEDLSEFFHRLEDIRAELDEASDVYSML) and 478–533 (QAKL…FGAL). Residues 532-601 (ALPPGTKIPL…PPPPLGFLGG (70 aa)) are disordered. The 71-residue stretch at 540 to 610 (PLQPSVEGEA…GQSSIPLNLP (71 aa)) folds into the FH1 domain. The span at 553–596 (ALPPAPPALSGGVPPPPPPPPPPPPPLPGMPMPFGGPVPPPPPL) shows a compositional bias: pro residues. Position 604 is a phosphoserine (Ser604). Residues 615-1013 (PKKEFKPEIS…EKRARIAKER (399 aa)) enclose the FH2 domain. Coiled coils occupy residues 887–918 (DKASRVSVEMLEKNVKQMGRQLQQLEKNLETF) and 988–1038 (MLAL…GDET). The 31-residue stretch at 1036–1066 (DETGVMDSLLEALQSGAAFRDRRKRTPKLKD) folds into the DAD domain. Phosphoserine is present on residues Ser1072 and Ser1157. Positions 1162–1171 (EALLARLRAL) match the Nuclear export signal motif.

Belongs to the formin homology family. Diaphanous subfamily. Ubiquitinated.

The protein resides in the cytoplasm. It localises to the nucleus. Its function is as follows. Actin nucleation and elongation factor required for the assembly of F-actin structures, such as actin cables and stress fibers. Required for cytokinesis, stress fiber formation and transcriptional activation of the serum response factor. Binds to GTP-bound form of Rho and to profilin: acts in a Rho-dependent manner to recruit profilin to the membrane, where it promotes actin polymerization. DFR proteins couple Rho and Src tyrosine kinase during signaling and the regulation of actin dynamics. Also acts as an actin nucleation and elongation factor in the nucleus by promoting nuclear actin polymerization inside the nucleus to drive serum-dependent SRF-MRTFA activity. The protein is Protein diaphanous homolog 3 (Diaph3) of Mus musculus (Mouse).